The sequence spans 289 residues: UPF0725 protein At1g27860 (289 aa).

The tract at residues 266–289 (DQQRSMTLPSGEQAESSKKRPRLS) is disordered. Residues 268–279 (QRSMTLPSGEQA) are compositionally biased toward polar residues.

This sequence belongs to the UPF0725 (EMB2204) family.

The sequence is that of UPF0725 protein At1g27860 from Arabidopsis thaliana (Mouse-ear cress).